The sequence spans 364 residues: Carbamoyl phosphate synthase pyrimidine-specific small chain (364 aa).

Residues 1–169 form a CPSase region; it reads MKRYLVLEDG…AYPNPATGPN (169 aa). L-glutamine is bound by residues S45, G217, and G219. One can recognise a Glutamine amidotransferase type-1 domain in the interval 169-356; the sequence is NVVVVDFGLK…IDLMAANQAT (188 aa). C244 (nucleophile) is an active-site residue. L245, Q248, N286, G288, and Y289 together coordinate L-glutamine. Residues H329 and D331 contribute to the active site.

The protein belongs to the CarA family. Composed of two chains; the small (or glutamine) chain promotes the hydrolysis of glutamine to ammonia, which is used by the large (or ammonia) chain to synthesize carbamoyl phosphate. Tetramer of heterodimers (alpha,beta)4.

The catalysed reaction is hydrogencarbonate + L-glutamine + 2 ATP + H2O = carbamoyl phosphate + L-glutamate + 2 ADP + phosphate + 2 H(+). The enzyme catalyses L-glutamine + H2O = L-glutamate + NH4(+). It functions in the pathway pyrimidine metabolism; UMP biosynthesis via de novo pathway; (S)-dihydroorotate from bicarbonate: step 1/3. Its activity is regulated as follows. Inhibited by pyrimidine. Small subunit of the glutamine-dependent carbamoyl phosphate synthetase (CPSase). CPSase catalyzes the formation of carbamoyl phosphate from the ammonia moiety of glutamine, carbonate, and phosphate donated by ATP, constituting the first step of the biosynthetic pathway leading to pyrimidine nucleotides. The small subunit (glutamine amidotransferase) binds and cleaves glutamine to supply the large subunit with the substrate ammonia. In Lactiplantibacillus plantarum (strain ATCC BAA-793 / NCIMB 8826 / WCFS1) (Lactobacillus plantarum), this protein is Carbamoyl phosphate synthase pyrimidine-specific small chain.